A 208-amino-acid polypeptide reads, in one-letter code: uncharacterized protein (208 aa).

Disordered stretches follow at residues 1–78 and 154–208; these read MDLF…SPTE and RRRS…PRNY. Positions 40 to 51 are enriched in basic residues; sequence KNHKKAQPRRTT. A compositionally biased stretch (polar residues) spans 179-197; it reads ANSSSPNPTATGSETSYGS.

This is an uncharacterized protein from Caenorhabditis elegans.